We begin with the raw amino-acid sequence, 368 residues long: DNA replication and repair protein RecF (368 aa).

30-37 (GNNAQGKT) contributes to the ATP binding site.

Belongs to the RecF family.

It is found in the cytoplasm. Its function is as follows. The RecF protein is involved in DNA metabolism; it is required for DNA replication and normal SOS inducibility. RecF binds preferentially to single-stranded, linear DNA. It also seems to bind ATP. This Streptococcus pyogenes serotype M49 (strain NZ131) protein is DNA replication and repair protein RecF.